The sequence spans 99 residues: NADH dehydrogenase [ubiquinone] 1 alpha subcomplex subunit 2 (99 aa).

Ala-2 bears the N-acetylalanine mark. Cys-24 and Cys-58 are joined by a disulfide. Lys-64 bears the N6-acetyllysine; alternate mark. Residue Lys-64 is modified to N6-succinyllysine; alternate. At Lys-75 the chain carries N6-acetyllysine.

It belongs to the complex I NDUFA2 subunit family. As to quaternary structure, complex I is composed of 45 different subunits.

The protein localises to the mitochondrion inner membrane. Its function is as follows. Accessory subunit of the mitochondrial membrane respiratory chain NADH dehydrogenase (Complex I), that is believed not to be involved in catalysis. Complex I functions in the transfer of electrons from NADH to the respiratory chain. The immediate electron acceptor for the enzyme is believed to be ubiquinone. The sequence is that of NADH dehydrogenase [ubiquinone] 1 alpha subcomplex subunit 2 (NDUFA2) from Bos taurus (Bovine).